Here is a 396-residue protein sequence, read N- to C-terminus: Elongation factor Tu (396 aa).

The tr-type G domain maps to lysine 10–glutamate 206. The tract at residues glycine 19–threonine 26 is G1. Residue glycine 19–threonine 26 participates in GTP binding. Mg(2+) is bound at residue threonine 26. A G2 region spans residues glycine 60–asparagine 64. Residues aspartate 81–glycine 84 are G3. GTP is bound by residues aspartate 81–histidine 85 and asparagine 136–aspartate 139. The segment at asparagine 136–aspartate 139 is G4. Residues serine 174–leucine 176 form a G5 region.

It belongs to the TRAFAC class translation factor GTPase superfamily. Classic translation factor GTPase family. EF-Tu/EF-1A subfamily. As to quaternary structure, monomer.

The protein localises to the cytoplasm. The enzyme catalyses GTP + H2O = GDP + phosphate + H(+). Functionally, GTP hydrolase that promotes the GTP-dependent binding of aminoacyl-tRNA to the A-site of ribosomes during protein biosynthesis. The sequence is that of Elongation factor Tu from Acinetobacter baylyi (strain ATCC 33305 / BD413 / ADP1).